Reading from the N-terminus, the 485-residue chain is Phenylalanine--tRNA ligase alpha subunit, cytoplasmic (485 aa).

Residues Thr318, Gln360–Glu362, and Tyr400 contribute to the L-phenylalanine site. Position 402 (Glu402) interacts with Mg(2+). An L-phenylalanine-binding site is contributed by Phe426.

The protein belongs to the class-II aminoacyl-tRNA synthetase family. Phe-tRNA synthetase alpha subunit type 2 subfamily. In terms of assembly, tetramer of two alpha and two beta subunits. Mg(2+) serves as cofactor.

It localises to the cytoplasm. The protein localises to the cytosol. The enzyme catalyses tRNA(Phe) + L-phenylalanine + ATP = L-phenylalanyl-tRNA(Phe) + AMP + diphosphate + H(+). The chain is Phenylalanine--tRNA ligase alpha subunit, cytoplasmic from Arabidopsis thaliana (Mouse-ear cress).